We begin with the raw amino-acid sequence, 229 residues long: tRNA pseudouridine synthase B (229 aa).

The Nucleophile role is filled by aspartate 52.

It belongs to the pseudouridine synthase TruB family. Type 1 subfamily.

The catalysed reaction is uridine(55) in tRNA = pseudouridine(55) in tRNA. In terms of biological role, responsible for synthesis of pseudouridine from uracil-55 in the psi GC loop of transfer RNAs. The chain is tRNA pseudouridine synthase B from Flavobacterium johnsoniae (strain ATCC 17061 / DSM 2064 / JCM 8514 / BCRC 14874 / CCUG 350202 / NBRC 14942 / NCIMB 11054 / UW101) (Cytophaga johnsonae).